Reading from the N-terminus, the 1018-residue chain is Probable inorganic carbon transporter subunit DabA 2 (1018 aa).

Cys-489, Asp-491, His-674, and Cys-689 together coordinate Zn(2+).

It belongs to the inorganic carbon transporter (TC 9.A.2) DabA family. As to quaternary structure, forms a complex with DabB. Zn(2+) is required as a cofactor.

The protein localises to the cell inner membrane. Its function is as follows. Part of an energy-coupled inorganic carbon pump. The polypeptide is Probable inorganic carbon transporter subunit DabA 2 (Sorangium cellulosum (strain So ce56) (Polyangium cellulosum (strain So ce56))).